The primary structure comprises 479 residues: MVLAELGGRITRAIQQMNNVTIIDEKVLNDFLNEITRALLQSDVSFGLVEKMQTNIKKIVNLDDLAAGHNKRLIIEQAIFKELCRMLDPGKPAFAPKKAKPSVVMFVGLQGAGKTTTCTKYAYYHQKKGYKAALVCADTFRAGAFDQLKQNATKAKIPFYGSYTESDPVKIAVEGVDRFKKEKCDLIIVDTSGRHKQAASLFEEMRQVAEATEPDLVIFVMDSSIGQAAFEQAEAFKETVSVGAVIITKMDGHAKGGGALSAVAATKSPVIFIGTGEHMDEFEVFDVKPFVSRLLGKGDWSGLVDKLQEVVPKDLQNELVENLSQGNFTLRSMYDQFQCSLRIPLNQLFSMLPGISAEMMPKGHGEESRVKMKRYMTMMDSMTNKELDSPNPKIFNESRIMRIARGSGRLVREVMEMLEEYKRIAKTMKGIKIPKNGDMSKVIPPQMLKQMGGMSGLQSLMKQMGSAKDMMGMFGGGGK.

The G-domain stretch occupies residues 1 to 295 (MVLAELGGRI…DVKPFVSRLL (295 aa)). GTP contacts are provided by residues 108 to 115 (GLQGAGKT), 190 to 194 (DTSGR), and 248 to 251 (TKMD). The tract at residues 296–479 (GKGDWSGLVD…MMGMFGGGGK (184 aa)) is M-domain.

It belongs to the GTP-binding SRP family. SRP54 subfamily. As to quaternary structure, component of a signal recognition particle (SRP) complex that consists of a 7SL RNA molecule of 300 nucleotides and six protein subunits: SRP72, SRP68, SRP54, SRP19, SRP14 and SRP9.

The protein resides in the cytoplasm. It is found in the endoplasmic reticulum. It carries out the reaction GTP + H2O = GDP + phosphate + H(+). Functionally, component of the signal recognition particle (SRP) complex, a ribonucleoprotein complex that mediates the cotranslational targeting of secretory and membrane proteins to the endoplasmic reticulum (ER). As part of the SRP complex, associates with the SRP receptor (SR) component SRPRA to target secretory proteins to the endoplasmic reticulum membrane. Binds to the signal sequence of presecretory proteins when they emerge from the ribosomes. Displays basal GTPase activity, and stimulates reciprocal GTPase activation of the SR subunit SRPRA. Forms a guanosine 5'-triphosphate (GTP)-dependent complex with the SR subunit SRPRA. SR compaction and GTPase mediated rearrangement of SR drive SRP-mediated cotranslational protein translocation into the ER. Requires the presence of SRP9/SRP14 and/or SRP19 to stably interact with RNA. The sequence is that of Signal recognition particle subunit SRP54 1 (SRP-54A) from Arabidopsis thaliana (Mouse-ear cress).